Reading from the N-terminus, the 200-residue chain is Large ribosomal subunit protein uL18 (200 aa).

The protein belongs to the universal ribosomal protein uL18 family. In terms of assembly, part of the 50S ribosomal subunit. Contacts the 5S and 23S rRNAs.

This is one of the proteins that bind and probably mediate the attachment of the 5S RNA into the large ribosomal subunit, where it forms part of the central protuberance. The sequence is that of Large ribosomal subunit protein uL18 from Thermococcus sibiricus (strain DSM 12597 / MM 739).